Here is a 571-residue protein sequence, read N- to C-terminus: Potassium-transporting ATPase potassium-binding subunit (571 aa).

The next 11 membrane-spanning stretches (helical) occupy residues Gly-5–Trp-25, Leu-64–Ile-84, Gly-136–Ile-156, Ile-178–Ile-198, Leu-254–Phe-274, Trp-285–Ala-305, Phe-330–Val-350, Phe-357–Val-379, Met-421–Leu-441, Leu-488–Gly-508, and Gly-527–Phe-547.

The protein belongs to the KdpA family. As to quaternary structure, the system is composed of three essential subunits: KdpA, KdpB and KdpC.

It localises to the cell inner membrane. In terms of biological role, part of the high-affinity ATP-driven potassium transport (or Kdp) system, which catalyzes the hydrolysis of ATP coupled with the electrogenic transport of potassium into the cytoplasm. This subunit binds the periplasmic potassium ions and delivers the ions to the membrane domain of KdpB through an intramembrane tunnel. In Methylobacterium nodulans (strain LMG 21967 / CNCM I-2342 / ORS 2060), this protein is Potassium-transporting ATPase potassium-binding subunit.